The sequence spans 139 residues: Protein archease (139 aa).

Ca(2+) contacts are provided by aspartate 12, aspartate 138, and isoleucine 139.

Belongs to the archease family.

Activates the tRNA-splicing ligase complex by facilitating the enzymatic turnover of catalytic subunit RtcB. Acts by promoting the guanylylation of RtcB, a key intermediate step in tRNA ligation. Can also alter the NTP specificity of RtcB such that ATP, dGTP or ITP is used efficiently. The protein is Protein archease of Saccharolobus islandicus (strain L.S.2.15 / Lassen #1) (Sulfolobus islandicus).